The chain runs to 469 residues: MTQQQVRTRFAPSPTGFIHLGNIRSALYPWAFARANDGVFILRIEDTDLERSTQASVDVILEGMSWLQLDHDEGPYYQMQRMERYKEVLAQLQAAGHVYPCYMSVEELDALRERQMAAKEKPRYDGTWRPEPGKVLPPVPEGVKPVLRFKTPQGGVVGWDDKCKGRIEFQNSELDDLVIARPDGTPTYNFCVCVDDMDMRITHVIRGDDHVNNTPRQIHIFEALGATVPVFAHLPTVLNEQGEKMSKRNGAKAVTQYRDEGYLPDAMVNYLARLGWSHGDDEIFSRAQFLEWFNLDHLGRSAGQFDEAKLRWVNAQHLKAMEDAQLAALVRPFVVQAGVPETQLDADDRLPRICALFKDRCETLVDLARWARVFYVDAIEPDADDFAKHVTETAAPALDAFAAAMETVAWNKDAINAAIKDVLKQLGLKMPQLAMPVRVLTMGTAHTPSVDAVLELLGREKILARLKSR.

The short motif at 12–22 is the 'HIGH' region element; that stretch reads PSPTGFIHLGN. The short motif at 244–248 is the 'KMSKS' region element; sequence KMSKR. An ATP-binding site is contributed by Lys-247.

It belongs to the class-I aminoacyl-tRNA synthetase family. Glutamate--tRNA ligase type 1 subfamily. Monomer.

Its subcellular location is the cytoplasm. It catalyses the reaction tRNA(Glu) + L-glutamate + ATP = L-glutamyl-tRNA(Glu) + AMP + diphosphate. Catalyzes the attachment of glutamate to tRNA(Glu) in a two-step reaction: glutamate is first activated by ATP to form Glu-AMP and then transferred to the acceptor end of tRNA(Glu). This is Glutamate--tRNA ligase from Acidovorax sp. (strain JS42).